The sequence spans 289 residues: Phosphatidylserine decarboxylase proenzyme (289 aa).

Catalysis depends on charge relay system; for autoendoproteolytic cleavage activity residues D89, H146, and S252. Residue S252 is the Schiff-base intermediate with substrate; via pyruvic acid; for decarboxylase activity of the active site. S252 carries the post-translational modification Pyruvic acid (Ser); by autocatalysis.

This sequence belongs to the phosphatidylserine decarboxylase family. PSD-B subfamily. Prokaryotic type I sub-subfamily. Heterodimer of a large membrane-associated beta subunit and a small pyruvoyl-containing alpha subunit. Requires pyruvate as cofactor. In terms of processing, is synthesized initially as an inactive proenzyme. Formation of the active enzyme involves a self-maturation process in which the active site pyruvoyl group is generated from an internal serine residue via an autocatalytic post-translational modification. Two non-identical subunits are generated from the proenzyme in this reaction, and the pyruvate is formed at the N-terminus of the alpha chain, which is derived from the carboxyl end of the proenzyme. The autoendoproteolytic cleavage occurs by a canonical serine protease mechanism, in which the side chain hydroxyl group of the serine supplies its oxygen atom to form the C-terminus of the beta chain, while the remainder of the serine residue undergoes an oxidative deamination to produce ammonia and the pyruvoyl prosthetic group on the alpha chain. During this reaction, the Ser that is part of the protease active site of the proenzyme becomes the pyruvoyl prosthetic group, which constitutes an essential element of the active site of the mature decarboxylase.

The protein localises to the cell membrane. The enzyme catalyses a 1,2-diacyl-sn-glycero-3-phospho-L-serine + H(+) = a 1,2-diacyl-sn-glycero-3-phosphoethanolamine + CO2. Its pathway is phospholipid metabolism; phosphatidylethanolamine biosynthesis; phosphatidylethanolamine from CDP-diacylglycerol: step 2/2. Its function is as follows. Catalyzes the formation of phosphatidylethanolamine (PtdEtn) from phosphatidylserine (PtdSer). In Shewanella putrefaciens (strain CN-32 / ATCC BAA-453), this protein is Phosphatidylserine decarboxylase proenzyme.